The following is a 335-amino-acid chain: Mevalonate kinase (335 aa).

111 to 121 lines the ATP pocket; it reads PVGAGLGSSAA. Aspartate 162 acts as the Proton acceptor in catalysis.

It belongs to the GHMP kinase family. Mevalonate kinase subfamily. Homodimer. Requires Mg(2+) as cofactor.

Its subcellular location is the cytoplasm. It catalyses the reaction (R)-mevalonate + ATP = (R)-5-phosphomevalonate + ADP + H(+). Its pathway is isoprenoid biosynthesis; isopentenyl diphosphate biosynthesis via mevalonate pathway; isopentenyl diphosphate from (R)-mevalonate: step 1/3. In terms of biological role, catalyzes the phosphorylation of (R)-mevalonate (MVA) to (R)-mevalonate 5-phosphate (MVAP). Functions in the mevalonate (MVA) pathway leading to isopentenyl diphosphate (IPP), a key precursor for the biosynthesis of isoprenoid compounds such as archaeal membrane lipids. This chain is Mevalonate kinase, found in Pyrococcus abyssi (strain GE5 / Orsay).